Consider the following 394-residue polypeptide: Outer membrane protein S1 (394 aa).

A signal peptide spans 1–21 (MNRKVLALLVPALLVAGAANA). A disordered region spans residues 222–242 (SSSDRSDNQVARGYGDGMNER).

The protein belongs to the Gram-negative porin family. Homotrimer.

It localises to the cell outer membrane. Functionally, forms pores that allow passive diffusion of small molecules across the outer membrane. The chain is Outer membrane protein S1 (ompS1) from Salmonella typhi.